We begin with the raw amino-acid sequence, 2078 residues long: MPGEATETVPATEQELPQPQAETAVLPMSSALSVTAALGQPGPTLPPPCSPAPQQCPLSAANQASPFPSPSTIASTPLEVPFPQSSSGTALPLGTAPEAPTFLPNLIGPPISPAALALASPMIAPTLKGTPSSSAPLALVALAPHSVQKSSAFPPNLLTSPPSVAVAESGSVITLSAPIAPSEPKTNLNKVPSEVVPNPKGTPSPPCIVSTVPYHCVTPMASIQSGVASLPQTTPTTTLAIASPQVKDTTISSVLISPQNPGSLSLKGPVSPPAALSLSTQSLPVVTSSQKTAGPNTPPDFPISLGSHLAPLHQSSFGSVQLLGQTGPSALSDPTVKTISVDHSSTGASYPSQRSVIPPLPSRNEVVPATVAAFPVVAPSVDKGPSTISSITCSPSGSLNVATSFSLSPTTSLILKSSPNATYHYPLVAQMPVSSVGTTPLVVTNPCTIAAAPTTTFEVATCVSPPMSSGPISNIEPTSPAALVMAPVAPKEPSTQVATTLRIPVSPPLPDPEDLKNLPSSVLVKFPTQKDLQTVPASLEGAPFSPAQAGLTTKKDPTVLPLVQAAPKNSPSFQSTSSSPEIPLSPEATLAKKSLGEPLPIGKPASSMTSPLGVNSSASVIKTDSYAGPDSAGPLLKSSLITPTVAAFPLESADPAGVAPTTAKGTSTYTTTASPFLEGTVSLAPKNHPVKEGTLTTLPLVPTASENCPVAPSPQNTCAPLATLVLAPEIPKSVPSPSLPPAGTPPGTKKVDGISHTSALAPVASSPKECPTEDSGASATASSKGTLTYLADSPSPLGVSVSPQTKRPPTKKGSAGPDTPIGNLSSPVSPVEASFLPENSLSFQGSKDSPATTHSPTPPSPKGAPTPSAVTPLSPKGVTLPPKETPTPSVVNLPFPKEGPATPAPKQAPALSMTSSSPKKARATPAPKGIPASPSPKGAPTPPAATPPSPKGGPATPSPKWAPTPPAATPPSPKGGPATPSPKGAPTPPAATPPSPKGGPATPSPKGAPTPPAVTPPSPKGSPAATPFPKGASTPPAATPPSPKGSPAATPLPKGAPTTPAATLPSPKGGPATPSLKGAPTPPAATPPSPKGGPATPSPKGAPMPPAATPPSPKGGLATPPHKGAPTTPAATPPSPKGGLATPPPKGAPTTPAATPPSPKGGLATPPPKGAPTTPAATPPSPKGGLATPSPKGAPTTPAATPPSPKGGLATPSPKGAPTTPAATPPSPKGGLATPSPKGAPTTPAATPPSPKGGPATPPPKGAPTPPAATPPSLKGGLATPPHKGAPNPAVVTPPSPKGGPATSPPKGAPTPPAATPPSPKGSPGTPPPKGAPTPPAVTPPSPKGTPTLPATTPSSKGGPTTPSSKEGPTPPAATPSHKGGPAMTPPSPKRGPAIPSPKGDPTSPAVIPLSPKKAPATPVTREGAATPSKGDLTPPAVTPVSLKKAPATSAPKGGPATPSSKGDPTLPAVTPPSPKEPPAPKQVATSSSPKKAPATPAPMGAPTLPAVIPSSPKEVPATPSSRRDPIAPTATLLSKKTPATLAPKEALIPPAMTVPSPKKTPAIPTPKEAPATPSSKEASSPPAVTPSTYKGAPSPKELLIPPAVTSPSPKEAPTPPAVTPPSPEKGPATPAPKGTPTSPPVTPSSLKDSPTSPASVTCKMGATVPQASKGLPAKKGPTALKEVLVAPAPESTPIITAPTRKGPQTKKSSATSPPICPDPSAKNGSKGPLSTVAPAPLLPVQKDSSKTAKGKDASHSPKGPLAPPESKASTPLTAAAFEKVLPKPESASVSAAPSPPVSLPLAPSPVPTLPPKQQFLPSSPGLVLESPSKPLAPADEDELLPLIPPEPISGGVPFQSVLVNMPTPKSAGIPVPTPSAKQPVTKNNKGSGTESDSDESVPELEEQDSTQATTQQAQLAAAAEIDEEPVSKAKQSRSEKKARKAMSKLGLRQVTGVTRVTIRKSKNILFVITKPDVYKSPASDTYIVFGEAKIEDLSQQAQLAAAEKFKVQGEAVSNIQENTQTPTVQEESEEEEVDETGVEVKDIELVMSQANVSRAKAVRALKNNSNDIVNAIMELTM.

Disordered regions lie at residues 1 to 21 (MPGE…QPQA), 37 to 96 (ALGQ…LGTA), 595 to 614 (LGEP…PLGV), and 732 to 1944 (KSVP…KAMS). Composition is skewed to polar residues over residues 9–21 (VPAT…QPQA) and 60–75 (AANQ…TIAS). Over residues 775–786 (SGASATASSKGT) the composition is skewed to low complexity. Residues 837–847 (PENSLSFQGSK) are compositionally biased toward polar residues. Position 917 is a phosphoserine (Ser917). Residues 933–1020 (SPSPKGAPTP…PPAVTPPSPK (88 aa)) show a composition bias toward pro residues. Residues 1045–1067 (GSPAATPLPKGAPTTPAATLPSP) are compositionally biased toward low complexity. A compositionally biased stretch (pro residues) spans 1080 to 1113 (PTPPAATPPSPKGGPATPSPKGAPMPPAATPPSP). Over residues 1114 to 1130 (KGGLATPPHKGAPTTPA) the composition is skewed to low complexity. Composition is skewed to pro residues over residues 1131 to 1147 (ATPP…PPKG) and 1154 to 1170 (ATPP…PPKG). Phosphoserine is present on Ser1181. 3 stretches are compositionally biased toward low complexity: residues 1183-1199 (KGGL…TTPA), 1206-1222 (KGGL…TTPA), and 1229-1245 (KGGL…TTPA). Composition is skewed to pro residues over residues 1246 to 1270 (ATPP…PAAT) and 1292 to 1344 (VTPP…PSPK). Residues 1345–1366 (GTPTLPATTPSSKGGPTTPSSK) show a composition bias toward low complexity. Phosphoserine is present on residues Ser1397 and Ser1474. Residues 1470–1481 (VTPPSPKEPPAP) are compositionally biased toward pro residues. The span at 1485–1507 (ATSSSPKKAPATPAPMGAPTLPA) shows a compositional bias: low complexity. Pro residues predominate over residues 1611 to 1625 (KEAPTPPAVTPPSPE). The segment covering 1626–1637 (KGPATPAPKGTP) has biased composition (low complexity). Positions 1647 to 1656 (LKDSPTSPAS) are enriched in polar residues. The segment covering 1744–1756 (DSSKTAKGKDASH) has biased composition (basic and acidic residues). Over residues 1794–1811 (PSPPVSLPLAPSPVPTLP) the composition is skewed to pro residues. A PXLXP motif is present at residues 1841-1845 (LPLIP). Residues 1876–1891 (SAKQPVTKNNKGSGTE) are compositionally biased toward polar residues. Positions 1892–1905 (SDSDESVPELEEQD) are enriched in acidic residues. Ser1906 bears the Phosphoserine; by ILK1 mark. A compositionally biased stretch (low complexity) spans 1907–1920 (TQATTQQAQLAAAA). The required for DNA-binding stretch occupies residues 1932–1943 (QSRSEKKARKAM). An NAC-A/B domain is found at 1933 to 1998 (SRSEKKARKA…AKIEDLSQQA (66 aa)). Phosphoserine is present on Ser1995. An N6-acetyllysine; alternate modification is found at Lys2005. A Glycyl lysine isopeptide (Lys-Gly) (interchain with G-Cter in SUMO2); alternate cross-link involves residue Lys2005. Thr2022 is subject to Phosphothreonine; by GSK3-beta. Thr2024 is subject to Phosphothreonine. A phosphoserine mark is found at Ser2029, Ser2049, Ser2054, and Ser2066. Residues 2039–2078 (VEVKDIELVMSQANVSRAKAVRALKNNSNDIVNAIMELTM) enclose the UBA domain.

Interacts (via PXLXP motif) with the muscle-restricted histone methyltransferase SMYD1 (via MYND-type zinc finger).

The protein localises to the cytoplasm. Its subcellular location is the nucleus. In terms of biological role, cardiac- and muscle-specific transcription factor. May act to regulate the expression of genes involved in the development of myotubes. Plays a critical role in ventricular cardiomyocyte expansion and regulates postnatal skeletal muscle growth and regeneration. Involved in the organized assembly of thick and thin filaments of myofibril sarcomeres. This is Nascent polypeptide-associated complex subunit alpha, muscle-specific form (NACA) from Homo sapiens (Human).